We begin with the raw amino-acid sequence, 540 residues long: UDP-N-acetylmuramyl-tripeptide synthetase (540 aa).

Position 33 (Ser-33) interacts with UDP-N-acetyl-alpha-D-muramoyl-L-alanyl-D-glutamate. 114–120 (GTEGKSS) lines the ATP pocket. Residues 158–159 (TT), Ser-185, and Arg-195 contribute to the UDP-N-acetyl-alpha-D-muramoyl-L-alanyl-D-glutamate site. Position 227 is an N6-carboxylysine (Lys-227).

The protein belongs to the MurCDEF family. MurE subfamily. In terms of processing, carboxylation is probably crucial for Mg(2+) binding and, consequently, for the gamma-phosphate positioning of ATP.

The protein localises to the cytoplasm. It participates in cell wall biogenesis; peptidoglycan biosynthesis. Catalyzes the addition of an amino acid to the nucleotide precursor UDP-N-acetylmuramoyl-L-alanyl-D-glutamate (UMAG) in the biosynthesis of bacterial cell-wall peptidoglycan. This is UDP-N-acetylmuramyl-tripeptide synthetase from Treponema pallidum (strain Nichols).